The following is a 197-amino-acid chain: MNTKNKIGIFGGSFNPPHIGHLIISQYAIEMLQLDLLYIVPTYIPPHKSNDLAPFELRFKWCKITFSGPHISISDYEKNRQGISYSLYTVLYFSQLHRTKPYFITGEDSLSYIQNWHKYRDLLENCHFVVYPRYCNKPYEEHTRSVLKELYDSIIFLQAPLIQISASDIRKRIKERKSIKGMVHPQIEKQVIEYYSL.

This sequence belongs to the NadD family.

The catalysed reaction is nicotinate beta-D-ribonucleotide + ATP + H(+) = deamido-NAD(+) + diphosphate. It participates in cofactor biosynthesis; NAD(+) biosynthesis; deamido-NAD(+) from nicotinate D-ribonucleotide: step 1/1. Its function is as follows. Catalyzes the reversible adenylation of nicotinate mononucleotide (NaMN) to nicotinic acid adenine dinucleotide (NaAD). This is Probable nicotinate-nucleotide adenylyltransferase from Pseudothermotoga lettingae (strain ATCC BAA-301 / DSM 14385 / NBRC 107922 / TMO) (Thermotoga lettingae).